Consider the following 389-residue polypeptide: Probable serine/threonine-protein kinase PBL11 (389 aa).

Gly-2 carries the N-myristoyl glycine lipid modification. Cys-4 carries S-palmitoyl cysteine lipidation. The region spanning 68-353 is the Protein kinase domain; that stretch reads FRPDSVVGEG…NEIVKTMEEL (286 aa). Residues 74 to 82 and Lys-106 contribute to the ATP site; that span reads VGEGGFGCV. Residue Tyr-151 is modified to Phosphotyrosine. Asp-203 functions as the Proton acceptor in the catalytic mechanism. 2 positions are modified to phosphoserine: Ser-207 and Ser-237. Phosphothreonine occurs at positions 238 and 243. A Phosphotyrosine modification is found at Tyr-251.

It belongs to the protein kinase superfamily. Ser/Thr protein kinase family. In terms of tissue distribution, roots, leaves and stems.

The protein resides in the cell membrane. The catalysed reaction is L-seryl-[protein] + ATP = O-phospho-L-seryl-[protein] + ADP + H(+). It catalyses the reaction L-threonyl-[protein] + ATP = O-phospho-L-threonyl-[protein] + ADP + H(+). May play a role in the regulation of plant growth and development. May be involved in plant defense signaling. This chain is Probable serine/threonine-protein kinase PBL11, found in Arabidopsis thaliana (Mouse-ear cress).